Consider the following 323-residue polypeptide: Aldo-keto reductase family 1 member C1 (323 aa).

Residues 20–24 (GFGTY) and Asp-50 each bind NADP(+). Position 24 (Tyr-24) interacts with substrate. The active-site Proton donor is the Tyr-55. Residue His-117 coordinates substrate. Residues 166–167 (SN), Gln-190, and 216–222 (YSALGSH) each bind NADP(+). Substrate contacts are provided by His-222 and Trp-227. Position 270 to 280 (270 to 280 (KSYNEQRIRQN)) interacts with NADP(+).

The protein belongs to the aldo/keto reductase family. As to quaternary structure, monomer. As to expression, expressed in all tissues tested including liver, prostate, testis, adrenal gland, brain, uterus, mammary gland and keratinocytes. Highest levels found in liver, mammary gland and brain.

Its subcellular location is the cytoplasm. The protein resides in the cytosol. The catalysed reaction is a 3alpha-hydroxysteroid + NADP(+) = a 3-oxosteroid + NADPH + H(+). It carries out the reaction a 3alpha-hydroxysteroid + NAD(+) = a 3-oxosteroid + NADH + H(+). It catalyses the reaction (17R,20S)-17,20-dihydroxypregn-4-en-3-one + NADP(+) = 17alpha-hydroxyprogesterone + NADPH + H(+). The enzyme catalyses (17R,20S)-17,20-dihydroxypregn-4-en-3-one + NAD(+) = 17alpha-hydroxyprogesterone + NADH + H(+). The catalysed reaction is (20S)-hydroxypregn-4-en-3-one + NADP(+) = progesterone + NADPH + H(+). It carries out the reaction (20S)-hydroxypregn-4-en-3-one + NAD(+) = progesterone + NADH + H(+). It catalyses the reaction (1R,2R)-1,2-dihydrobenzene-1,2-diol + NADP(+) = catechol + NADPH + H(+). The enzyme catalyses (S)-indan-1-ol + NAD(+) = indan-1-one + NADH + H(+). The catalysed reaction is (S)-indan-1-ol + NADP(+) = indan-1-one + NADPH + H(+). It carries out the reaction 5alpha-androstane-3alpha,17beta-diol + NADP(+) = 17beta-hydroxy-5alpha-androstan-3-one + NADPH + H(+). It catalyses the reaction 5alpha-androstane-3beta,17beta-diol + NADP(+) = 17beta-hydroxy-5alpha-androstan-3-one + NADPH + H(+). The enzyme catalyses 5alpha-androstane-3alpha,17beta-diol + NAD(+) = 17beta-hydroxy-5alpha-androstan-3-one + NADH + H(+). The catalysed reaction is 17beta-hydroxy-5alpha-androstan-3-one + NADP(+) = 5alpha-androstan-3,17-dione + NADPH + H(+). It carries out the reaction androsterone + NADP(+) = 5alpha-androstan-3,17-dione + NADPH + H(+). It catalyses the reaction androsterone + NADPH + H(+) = 5alpha-androstane-3alpha,17beta-diol + NADP(+). The enzyme catalyses 5alpha-androstane-3alpha,17beta-diol + NAD(+) = androsterone + NADH + H(+). The catalysed reaction is 17beta-estradiol + NADP(+) = estrone + NADPH + H(+). It carries out the reaction 17beta-estradiol + NAD(+) = estrone + NADH + H(+). It catalyses the reaction testosterone + NADP(+) = androst-4-ene-3,17-dione + NADPH + H(+). The enzyme catalyses 20alpha-hydroxy-5beta-pregnan-3-one + NADP(+) = 5beta-pregnan-3,20-dione + NADPH + H(+). The catalysed reaction is 3beta-hydroxy-5beta-pregnane-20-one + NADP(+) = 5beta-pregnan-3,20-dione + NADPH + H(+). It carries out the reaction 3beta-hydroxy-5beta-pregnane-20-one + NADPH + H(+) = 3beta,20alpha-dihydroxy-5beta-pregnane + NADP(+). It catalyses the reaction (3beta,5alpha,17beta)-3-hydroxyandrostan-17-yl sulfate + NADP(+) = 5alpha-dihydrotestosterone sulfate + NADPH + H(+). It participates in steroid metabolism. With respect to regulation, inhibited by hexestrol with an IC(50) of 9.5 uM, 1,10-phenanthroline with an IC(50) of 55 uM, 1,7-phenanthroline with an IC(50) of 72 uM, flufenamic acid with an IC(50) of 6.0 uM, indomethacin with an IC(50) of 140 uM, ibuprofen with an IC(50) of 950 uM, lithocholic acid with an IC(50) of 25 uM, ursodeoxycholic acid with an IC(50) of 340 uM and chenodeoxycholic acid with an IC(50) of 570 uM. The oxidation reaction is inhibited by low micromolar concentrations of NADPH. In terms of biological role, cytosolic aldo-keto reductase that catalyzes the NADH and NADPH-dependent reduction of ketosteroids to hydroxysteroids. Most probably acts as a reductase in vivo since the oxidase activity measured in vitro is inhibited by physiological concentrations of NADPH. Displays a broad positional specificity acting on positions 3, 17 and 20 of steroids and regulates the metabolism of hormones like estrogens and androgens. May also reduce conjugated steroids such as 5alpha-dihydrotestosterone sulfate. Displays affinity for bile acids. This Homo sapiens (Human) protein is Aldo-keto reductase family 1 member C1 (AKR1C1).